We begin with the raw amino-acid sequence, 545 residues long: Chaperonin GroEL (545 aa).

ATP contacts are provided by residues 30–33 (TLGP), Lys51, 87–91 (DGTTT), Gly415, and Asp495.

It belongs to the chaperonin (HSP60) family. Forms a cylinder of 14 subunits composed of two heptameric rings stacked back-to-back. Interacts with the co-chaperonin GroES.

It is found in the cytoplasm. The catalysed reaction is ATP + H2O + a folded polypeptide = ADP + phosphate + an unfolded polypeptide.. Its function is as follows. Together with its co-chaperonin GroES, plays an essential role in assisting protein folding. The GroEL-GroES system forms a nano-cage that allows encapsulation of the non-native substrate proteins and provides a physical environment optimized to promote and accelerate protein folding. The chain is Chaperonin GroEL from Shewanella baltica (strain OS155 / ATCC BAA-1091).